Consider the following 425-residue polypeptide: Serine--tRNA ligase (425 aa).

230–232 provides a ligand contact to L-serine; it reads TAE. Position 261–263 (261–263) interacts with ATP; it reads RSE. Residue E284 coordinates L-serine. 348-351 contacts ATP; sequence EISS. Residue S384 coordinates L-serine.

Belongs to the class-II aminoacyl-tRNA synthetase family. Type-1 seryl-tRNA synthetase subfamily. As to quaternary structure, homodimer. The tRNA molecule binds across the dimer.

It is found in the cytoplasm. The catalysed reaction is tRNA(Ser) + L-serine + ATP = L-seryl-tRNA(Ser) + AMP + diphosphate + H(+). It catalyses the reaction tRNA(Sec) + L-serine + ATP = L-seryl-tRNA(Sec) + AMP + diphosphate + H(+). The protein operates within aminoacyl-tRNA biosynthesis; selenocysteinyl-tRNA(Sec) biosynthesis; L-seryl-tRNA(Sec) from L-serine and tRNA(Sec): step 1/1. Functionally, catalyzes the attachment of serine to tRNA(Ser). Is also able to aminoacylate tRNA(Sec) with serine, to form the misacylated tRNA L-seryl-tRNA(Sec), which will be further converted into selenocysteinyl-tRNA(Sec). This is Serine--tRNA ligase from Streptococcus equi subsp. equi (strain 4047).